We begin with the raw amino-acid sequence, 474 residues long: Methylenetetrahydrofolate--tRNA-(uracil-5-)-methyltransferase TrmFO (474 aa).

Residue 14–19 (GGGLAG) participates in FAD binding.

Belongs to the MnmG family. TrmFO subfamily. It depends on FAD as a cofactor.

The protein resides in the cytoplasm. It catalyses the reaction uridine(54) in tRNA + (6R)-5,10-methylene-5,6,7,8-tetrahydrofolate + NADH + H(+) = 5-methyluridine(54) in tRNA + (6S)-5,6,7,8-tetrahydrofolate + NAD(+). The enzyme catalyses uridine(54) in tRNA + (6R)-5,10-methylene-5,6,7,8-tetrahydrofolate + NADPH + H(+) = 5-methyluridine(54) in tRNA + (6S)-5,6,7,8-tetrahydrofolate + NADP(+). Its function is as follows. Catalyzes the folate-dependent formation of 5-methyl-uridine at position 54 (M-5-U54) in all tRNAs. This is Methylenetetrahydrofolate--tRNA-(uracil-5-)-methyltransferase TrmFO from Caulobacter vibrioides (strain ATCC 19089 / CIP 103742 / CB 15) (Caulobacter crescentus).